A 394-amino-acid polypeptide reads, in one-letter code: Elongation factor Tu (394 aa).

Positions 10–204 (KPHVNVGTIG…ALDTYIPEPE (195 aa)) constitute a tr-type G domain. A G1 region spans residues 19 to 26 (GHVDHGKT). 19–26 (GHVDHGKT) contacts GTP. Thr-26 contributes to the Mg(2+) binding site. Residues 60 to 64 (GITIA) form a G2 region. The interval 81–84 (DCPG) is G3. GTP-binding positions include 81-85 (DCPGH) and 136-139 (NKCD). The G4 stretch occupies residues 136–139 (NKCD). Positions 174–176 (SAL) are G5.

It belongs to the TRAFAC class translation factor GTPase superfamily. Classic translation factor GTPase family. EF-Tu/EF-1A subfamily. In terms of assembly, monomer.

The protein resides in the cytoplasm. It carries out the reaction GTP + H2O = GDP + phosphate + H(+). Its function is as follows. GTP hydrolase that promotes the GTP-dependent binding of aminoacyl-tRNA to the A-site of ribosomes during protein biosynthesis. This Vibrio parahaemolyticus serotype O3:K6 (strain RIMD 2210633) protein is Elongation factor Tu.